Reading from the N-terminus, the 228-residue chain is Triosephosphate isomerase (228 aa).

Residue 11 to 13 coordinates substrate; that stretch reads NFK. Catalysis depends on histidine 95, which acts as the Electrophile. The Proton acceptor role is filled by glutamate 143. Residues isoleucine 148, glycine 183, and 204 to 205 each bind substrate; that span reads AS.

The protein belongs to the triosephosphate isomerase family. Homotetramer; dimer of dimers.

It localises to the cytoplasm. It carries out the reaction D-glyceraldehyde 3-phosphate = dihydroxyacetone phosphate. Its pathway is carbohydrate biosynthesis; gluconeogenesis. It participates in carbohydrate degradation; glycolysis; D-glyceraldehyde 3-phosphate from glycerone phosphate: step 1/1. Involved in the gluconeogenesis. Catalyzes stereospecifically the conversion of dihydroxyacetone phosphate (DHAP) to D-glyceraldehyde-3-phosphate (G3P). In Pyrococcus abyssi (strain GE5 / Orsay), this protein is Triosephosphate isomerase.